Reading from the N-terminus, the 237-residue chain is Adenosine 5'-phosphosulfate reductase (237 aa).

The [4Fe-4S] cluster site is built by Cys123, Cys124, Cys206, and Cys209. The Nucleophile; cysteine thiosulfonate intermediate role is filled by Cys232.

The protein belongs to the PAPS reductase family. CysH subfamily. The cofactor is [4Fe-4S] cluster.

It is found in the cytoplasm. The enzyme catalyses [thioredoxin]-disulfide + sulfite + AMP + 2 H(+) = adenosine 5'-phosphosulfate + [thioredoxin]-dithiol. The protein operates within sulfur metabolism; hydrogen sulfide biosynthesis; sulfite from sulfate. Functionally, catalyzes the formation of sulfite from adenosine 5'-phosphosulfate (APS) using thioredoxin as an electron donor. The protein is Adenosine 5'-phosphosulfate reductase of Mycobacteroides abscessus (strain ATCC 19977 / DSM 44196 / CCUG 20993 / CIP 104536 / JCM 13569 / NCTC 13031 / TMC 1543 / L948) (Mycobacterium abscessus).